A 442-amino-acid chain; its full sequence is Proline--tRNA ligase (442 aa).

It belongs to the class-II aminoacyl-tRNA synthetase family. ProS type 2 subfamily. As to quaternary structure, homodimer.

It localises to the cytoplasm. The catalysed reaction is tRNA(Pro) + L-proline + ATP = L-prolyl-tRNA(Pro) + AMP + diphosphate. Functionally, catalyzes the attachment of proline to tRNA(Pro) in a two-step reaction: proline is first activated by ATP to form Pro-AMP and then transferred to the acceptor end of tRNA(Pro). This Brucella ovis (strain ATCC 25840 / 63/290 / NCTC 10512) protein is Proline--tRNA ligase.